We begin with the raw amino-acid sequence, 284 residues long: Sulfotransferase 2A1 (284 aa).

Positions 43, 44, 45, 46, 47, and 48 each coordinate 3'-phosphoadenylyl sulfate. The active-site Proton acceptor is His-98. 8 residues coordinate 3'-phosphoadenylyl sulfate: Arg-120, Ser-128, Tyr-183, Ser-217, Met-222, Arg-246, Lys-247, and Gly-248.

The protein belongs to the sulfotransferase 1 family. As to quaternary structure, homodimer.

The protein resides in the cytoplasm. It carries out the reaction an alcohol + 3'-phosphoadenylyl sulfate = an alkyl sulfate + adenosine 3',5'-bisphosphate + H(+). The enzyme catalyses taurolithocholate + 3'-phosphoadenylyl sulfate = taurolithocholate 3-sulfate + adenosine 3',5'-bisphosphate + H(+). It catalyses the reaction lithocholate + 3'-phosphoadenylyl sulfate = lithocholate sulfate + adenosine 3',5'-bisphosphate + H(+). The catalysed reaction is (24S)-hydroxycholesterol + 3'-phosphoadenylyl sulfate = (24S)-hydroxycholesterol 24-sulfate + adenosine 3',5'-bisphosphate + H(+). It carries out the reaction (24S)-hydroxycholesterol + 3'-phosphoadenylyl sulfate = (24S)-hydroxycholesterol 3-sulfate + adenosine 3',5'-bisphosphate + H(+). The enzyme catalyses (24S)-hydroxycholesterol 24-sulfate + 3'-phosphoadenylyl sulfate = (24S)-hydroxycholesterol 3,24-disulfate + adenosine 3',5'-bisphosphate + H(+). It catalyses the reaction 3beta-hydroxyandrost-5-en-17-one + 3'-phosphoadenylyl sulfate = dehydroepiandrosterone 3-sulfate + adenosine 3',5'-bisphosphate + H(+). The catalysed reaction is pregnenolone + 3'-phosphoadenylyl sulfate = pregnenolone sulfate + adenosine 3',5'-bisphosphate + H(+). It carries out the reaction androsterone + 3'-phosphoadenylyl sulfate = androsterone 3alpha-sulfate + adenosine 3',5'-bisphosphate + H(+). In terms of biological role, sulfotransferase that utilizes 3'-phospho-5'-adenylyl sulfate (PAPS) as sulfonate donor to catalyze the sulfonation of steroids and bile acids in the liver and adrenal glands. Mediates the sulfation of a wide range of steroids and sterols, including pregnenolone, androsterone, DHEA, bile acids, cholesterol and as well many xenobiotics that contain alcohol and phenol functional groups. Sulfonation increases the water solubility of most compounds, and therefore their renal excretion, but it can also result in bioactivation to form active metabolites. Plays an important role in maintening steroid and lipid homeostasis. Plays a key role in bile acid metabolism. In addition, catalyzes the metabolic activation of potent carcinogenic polycyclic arylmethanols. The protein is Sulfotransferase 2A1 (Sult2a1) of Rattus norvegicus (Rat).